A 347-amino-acid chain; its full sequence is Quinolinate synthase (347 aa).

Residues H47 and S68 each contribute to the iminosuccinate site. [4Fe-4S] cluster is bound at residue C113. Iminosuccinate-binding positions include 139–141 (YAN) and S156. Residue C200 coordinates [4Fe-4S] cluster. Iminosuccinate is bound by residues 226–228 (HPE) and T243. Residue C297 participates in [4Fe-4S] cluster binding.

This sequence belongs to the quinolinate synthase family. Type 1 subfamily. The cofactor is [4Fe-4S] cluster.

It is found in the cytoplasm. It catalyses the reaction iminosuccinate + dihydroxyacetone phosphate = quinolinate + phosphate + 2 H2O + H(+). It functions in the pathway cofactor biosynthesis; NAD(+) biosynthesis; quinolinate from iminoaspartate: step 1/1. In terms of biological role, catalyzes the condensation of iminoaspartate with dihydroxyacetone phosphate to form quinolinate. This Shigella boydii serotype 4 (strain Sb227) protein is Quinolinate synthase.